A 139-amino-acid polypeptide reads, in one-letter code: Small ribosomal subunit protein uS12 (139 aa).

Asp-102 carries the 3-methylthioaspartic acid modification. Positions Asp-116–Lys-139 are disordered. The span at Ser-124 to Lys-139 shows a compositional bias: basic residues.

Belongs to the universal ribosomal protein uS12 family. As to quaternary structure, part of the 30S ribosomal subunit. Contacts proteins S8 and S17. May interact with IF1 in the 30S initiation complex.

Functionally, with S4 and S5 plays an important role in translational accuracy. In terms of biological role, interacts with and stabilizes bases of the 16S rRNA that are involved in tRNA selection in the A site and with the mRNA backbone. Located at the interface of the 30S and 50S subunits, it traverses the body of the 30S subunit contacting proteins on the other side and probably holding the rRNA structure together. The combined cluster of proteins S8, S12 and S17 appears to hold together the shoulder and platform of the 30S subunit. The protein is Small ribosomal subunit protein uS12 of Mesomycoplasma hyopneumoniae (strain 7448) (Mycoplasma hyopneumoniae).